Consider the following 681-residue polypeptide: DNA ligase (681 aa).

Residues 33-37 (DGQFD), 83-84 (SL), and Glu113 contribute to the NAD(+) site. Lys115 acts as the N6-AMP-lysine intermediate in catalysis. NAD(+) contacts are provided by Arg136, Glu176, Lys292, and Lys316. Positions 410, 413, 429, and 435 each coordinate Zn(2+). The 83-residue stretch at 599–681 (SIPRNLEGLS…RALLADGPPA (83 aa)) folds into the BRCT domain.

It belongs to the NAD-dependent DNA ligase family. LigA subfamily. Requires Mg(2+) as cofactor. It depends on Mn(2+) as a cofactor.

The enzyme catalyses NAD(+) + (deoxyribonucleotide)n-3'-hydroxyl + 5'-phospho-(deoxyribonucleotide)m = (deoxyribonucleotide)n+m + AMP + beta-nicotinamide D-nucleotide.. Its function is as follows. DNA ligase that catalyzes the formation of phosphodiester linkages between 5'-phosphoryl and 3'-hydroxyl groups in double-stranded DNA using NAD as a coenzyme and as the energy source for the reaction. It is essential for DNA replication and repair of damaged DNA. The polypeptide is DNA ligase (Mycobacteroides abscessus (strain ATCC 19977 / DSM 44196 / CCUG 20993 / CIP 104536 / JCM 13569 / NCTC 13031 / TMC 1543 / L948) (Mycobacterium abscessus)).